Reading from the N-terminus, the 102-residue chain is Noncompact myelin-associated protein (102 aa).

Over 1–30 (MTTATPLGDTTFFSLNMTTRGEDFLYKSSG) the chain is Extracellular. The helical transmembrane segment at 31-51 (AIVAAVVVVVIIIFTVVLILL) threads the bilayer. Topologically, residues 52–102 (KMYNRKMRTRRELEPKGPKPTAPSAVGPNSNGSQHPATVTFSPVDVQVETR) are cytoplasmic. A disordered region spans residues 60–102 (TRRELEPKGPKPTAPSAVGPNSNGSQHPATVTFSPVDVQVETR). The span at 78–92 (GPNSNGSQHPATVTF) shows a compositional bias: polar residues.

Glycosylated.

The protein localises to the cell membrane. Functionally, plays a role in myelin formation. In Homo sapiens (Human), this protein is Noncompact myelin-associated protein (NCMAP).